Reading from the N-terminus, the 132-residue chain is Protein NrdI (132 aa).

The protein belongs to the NrdI family.

Its function is as follows. Probably involved in ribonucleotide reductase function. The protein is Protein NrdI of Staphylococcus aureus (strain Mu3 / ATCC 700698).